Consider the following 730-residue polypeptide: Dual function macrocyclase-peptidase POPB (730 aa).

The tract at residues M1–P34 is disordered. Active-site charge relay system residues include S577, D661, and H698.

The protein belongs to the peptidase S9A family. In terms of assembly, monomer.

The catalysed reaction is Hydrolysis of Pro-|-Xaa &gt;&gt; Ala-|-Xaa in oligopeptides.. Dual function macrocyclase-peptidase involved in the biosynthesis of the highly toxic amanitin toxin family of macrocycles. Cleaves peptide bonds on the C-terminal side of prolyl residues. The enzyme first removes 10 residues from the N-terminus of a 35-residue substrate. Conformational trapping of the 25 amino-acid peptide forces the enzyme to release this intermediate rather than proceed to macrocyclization. The enzyme rebinds the 25 amino-acid peptide in a different conformation and catalyzes macrocyclization of the N-terminal eight residues. The chain is Dual function macrocyclase-peptidase POPB from Galerina marginata (strain CBS 339.88).